Consider the following 179-residue polypeptide: Peptide deformylase (179 aa).

Residues Cys102 and His144 each contribute to the Fe cation site. Glu145 is an active-site residue. Residue His148 coordinates Fe cation.

Belongs to the polypeptide deformylase family. Fe(2+) serves as cofactor.

It carries out the reaction N-terminal N-formyl-L-methionyl-[peptide] + H2O = N-terminal L-methionyl-[peptide] + formate. Its function is as follows. Removes the formyl group from the N-terminal Met of newly synthesized proteins. Requires at least a dipeptide for an efficient rate of reaction. N-terminal L-methionine is a prerequisite for activity but the enzyme has broad specificity at other positions. This chain is Peptide deformylase, found in Wolbachia pipientis subsp. Culex pipiens (strain wPip).